Consider the following 103-residue polypeptide: Small ribosomal subunit protein uS14c (103 aa).

Residues 34 to 56 (KVSPLSLSEKTKMREKLQSLPRN) are disordered.

This sequence belongs to the universal ribosomal protein uS14 family. In terms of assembly, part of the 30S ribosomal subunit.

The protein localises to the plastid. Its subcellular location is the chloroplast. Its function is as follows. Binds 16S rRNA, required for the assembly of 30S particles. The sequence is that of Small ribosomal subunit protein uS14c from Brachypodium distachyon (Purple false brome).